Consider the following 827-residue polypeptide: Zinc finger protein 438 (827 aa).

3 disordered regions span residues methionine 1–lysine 31, leucine 117–proline 173, and alanine 193–aspartate 232. Composition is skewed to polar residues over residues asparagine 16 to lysine 31 and proline 150 to methionine 159. Over residues proline 217 to glutamate 226 the composition is skewed to pro residues. 3 consecutive C2H2-type zinc fingers follow at residues histidine 506–histidine 528, tyrosine 534–histidine 556, and methionine 566–histidine 589. The disordered stretch occupies residues phenylalanine 682 to proline 723. Composition is skewed to basic and acidic residues over residues threonine 688 to aspartate 699 and arginine 706 to alanine 721. A C2H2-type 4 zinc finger spans residues phenylalanine 775 to histidine 798.

Its subcellular location is the nucleus. Its function is as follows. Acts as a transcriptional repressor. This chain is Zinc finger protein 438 (ZNF438), found in Pongo abelii (Sumatran orangutan).